A 422-amino-acid polypeptide reads, in one-letter code: L-2-hydroxyglutarate dehydrogenase (422 aa).

This sequence belongs to the L2HGDH family. FAD is required as a cofactor.

The protein localises to the cell inner membrane. The enzyme catalyses (S)-2-hydroxyglutarate + a quinone = a quinol + 2-oxoglutarate. It functions in the pathway amino-acid degradation. In terms of biological role, catalyzes the dehydrogenation of L-2-hydroxyglutarate (L2HG) to alpha-ketoglutarate and couples to the respiratory chain by feeding electrons from the reaction into the membrane quinone pool. Functions in a L-lysine degradation pathway that proceeds via cadaverine, glutarate and L-2-hydroxyglutarate. Also displays some oxidase activity in vitro on L-2-hydroxyglutarate with O2 as the electron acceptor, but this activity is most likely not physiological. The sequence is that of L-2-hydroxyglutarate dehydrogenase from Escherichia coli O17:K52:H18 (strain UMN026 / ExPEC).